The primary structure comprises 360 residues: Polyamine aminopropyltransferase 2 (360 aa).

A PABS domain is found at 68–299 (DIWDEISLKE…TDWGFHIAAN (232 aa)). Gln-94 contacts S-methyl-5'-thioadenosine. Residues His-123 and Asp-147 each coordinate spermidine. S-methyl-5'-thioadenosine is bound by residues Asp-167 and 201-202 (DA). Asp-219 acts as the Proton acceptor in catalysis.

The protein belongs to the spermidine/spermine synthase family. In terms of assembly, homodimer or homotetramer.

The protein localises to the cytoplasm. The catalysed reaction is S-adenosyl 3-(methylsulfanyl)propylamine + putrescine = S-methyl-5'-thioadenosine + spermidine + H(+). It participates in amine and polyamine biosynthesis; spermidine biosynthesis; spermidine from putrescine: step 1/1. Its function is as follows. Catalyzes the irreversible transfer of a propylamine group from the amino donor S-adenosylmethioninamine (decarboxy-AdoMet) to putrescine (1,4-diaminobutane) to yield spermidine. The polypeptide is Polyamine aminopropyltransferase 2 (Bacillus anthracis).